The primary structure comprises 491 residues: UDP-N-acetylmuramate--L-alanine ligase (491 aa).

An ATP-binding site is contributed by 126 to 132 (GTHGKTT).

It belongs to the MurCDEF family.

It localises to the cytoplasm. It carries out the reaction UDP-N-acetyl-alpha-D-muramate + L-alanine + ATP = UDP-N-acetyl-alpha-D-muramoyl-L-alanine + ADP + phosphate + H(+). The protein operates within cell wall biogenesis; peptidoglycan biosynthesis. Its function is as follows. Cell wall formation. The protein is UDP-N-acetylmuramate--L-alanine ligase of Escherichia coli O7:K1 (strain IAI39 / ExPEC).